The chain runs to 503 residues: Maturase K (503 aa).

It belongs to the intron maturase 2 family. MatK subfamily.

The protein resides in the plastid. Its subcellular location is the chloroplast. Usually encoded in the trnK tRNA gene intron. Probably assists in splicing its own and other chloroplast group II introns. This Kunzea pulchella (Red kunzea) protein is Maturase K.